A 464-amino-acid chain; its full sequence is UDP-N-acetylmuramoylalanine--D-glutamate ligase (464 aa).

112–118 (GTDGKTT) lines the ATP pocket.

This sequence belongs to the MurCDEF family.

The protein localises to the cytoplasm. The enzyme catalyses UDP-N-acetyl-alpha-D-muramoyl-L-alanine + D-glutamate + ATP = UDP-N-acetyl-alpha-D-muramoyl-L-alanyl-D-glutamate + ADP + phosphate + H(+). Its pathway is cell wall biogenesis; peptidoglycan biosynthesis. Functionally, cell wall formation. Catalyzes the addition of glutamate to the nucleotide precursor UDP-N-acetylmuramoyl-L-alanine (UMA). In Chlorobium chlorochromatii (strain CaD3), this protein is UDP-N-acetylmuramoylalanine--D-glutamate ligase.